The following is a 197-amino-acid chain: Adenylate kinase 1 (197 aa).

Position 19–24 (19–24) interacts with ATP; the sequence is GSGKGT. The NMP stretch occupies residues 39–68; sequence SSGDLLRAEVQSGSPKGKELKAMMERGELV. AMP contacts are provided by residues serine 40, arginine 45, 95-98, and glutamine 102; that span reads GYPR. Residues 132–142 are LID; sequence KRAETSNRVDD. Arginine 133 provides a ligand contact to ATP. Residues arginine 139 and arginine 150 each contribute to the AMP site. Glycine 178 lines the ATP pocket.

This sequence belongs to the adenylate kinase family. AK1 subfamily. As to quaternary structure, monomer. It depends on Mg(2+) as a cofactor.

The protein resides in the cytoplasm. It catalyses the reaction AMP + ATP = 2 ADP. Its pathway is purine metabolism; purine nucleotide biosynthesis. Functionally, catalyzes the reversible transfer of the terminal phosphate group between ATP and AMP. Plays an important role in cellular energy homeostasis and in adenine nucleotide metabolism. This chain is Adenylate kinase 1, found in Schistosoma mansoni (Blood fluke).